A 295-amino-acid chain; its full sequence is Histamine N-methyltransferase (295 aa).

Glu28 provides a ligand contact to substrate. S-adenosyl-L-methionine contacts are provided by Gly60, Glu89, Gln94, Ser120, and Ile143. Asn284 is a binding site for substrate.

Belongs to the class I-like SAM-binding methyltransferase superfamily. HNMT family. As to quaternary structure, monomer.

Its subcellular location is the cytoplasm. The catalysed reaction is histamine + S-adenosyl-L-methionine = N(tau)-methylhistamine + S-adenosyl-L-homocysteine + H(+). In terms of biological role, inactivates histamine by N-methylation. Plays an important role in degrading histamine and in regulating the airway response to histamine. In Mus musculus (Mouse), this protein is Histamine N-methyltransferase (Hnmt).